Reading from the N-terminus, the 216-residue chain is Small ribosomal subunit protein uS3c (216 aa).

The KH type-2 domain occupies 39 to 109 (IRSYINRELE…SIRINVIELT (71 aa)).

Belongs to the universal ribosomal protein uS3 family. In terms of assembly, part of the 30S ribosomal subunit.

It localises to the plastid. Its subcellular location is the chloroplast. This is Small ribosomal subunit protein uS3c (rps3) from Guillardia theta (Cryptophyte).